Reading from the N-terminus, the 230-residue chain is MTVTLALPSKGRLKDATVELLREAGYPIRLPENERRYRAGIDGLDGLEVTFLSASEIARELDRGSIDLGVTGEDLVRETIPDWESRVEIAARLGFGHADVVVAVPEIWFDVSTMADLDDVAADFRHRHSRRLRIATKYWRLTQQFFSQKHGIQVYRIVESLGATEGAPAAGSADIIVDITSTGSTLKANHLKVLDDGVILRSQACLVVAKKKRPAEDARLIAELAKAVRR.

Belongs to the ATP phosphoribosyltransferase family. Short subfamily. Heteromultimer composed of HisG and HisZ subunits.

Its subcellular location is the cytoplasm. It carries out the reaction 1-(5-phospho-beta-D-ribosyl)-ATP + diphosphate = 5-phospho-alpha-D-ribose 1-diphosphate + ATP. It participates in amino-acid biosynthesis; L-histidine biosynthesis; L-histidine from 5-phospho-alpha-D-ribose 1-diphosphate: step 1/9. In terms of biological role, catalyzes the condensation of ATP and 5-phosphoribose 1-diphosphate to form N'-(5'-phosphoribosyl)-ATP (PR-ATP). Has a crucial role in the pathway because the rate of histidine biosynthesis seems to be controlled primarily by regulation of HisG enzymatic activity. In Chelativorans sp. (strain BNC1), this protein is ATP phosphoribosyltransferase (hisG).